The sequence spans 129 residues: Small ribosomal subunit protein uS11 (129 aa).

This sequence belongs to the universal ribosomal protein uS11 family. Part of the 30S ribosomal subunit. Interacts with proteins S7 and S18. Binds to IF-3.

Located on the platform of the 30S subunit, it bridges several disparate RNA helices of the 16S rRNA. Forms part of the Shine-Dalgarno cleft in the 70S ribosome. This is Small ribosomal subunit protein uS11 from Macrococcus caseolyticus (strain JCSC5402) (Macrococcoides caseolyticum).